A 70-amino-acid polypeptide reads, in one-letter code: Protein tam14 (70 aa).

Residues 1-19 show a composition bias toward polar residues; that stretch reads MPTVQTPSQRRANTQFQKN. Residues 1-20 form a disordered region; the sequence is MPTVQTPSQRRANTQFQKNI. Residues 45 to 65 form a helical membrane-spanning segment; sequence IAMFFILLMSGGIILGILRFL.

Belongs to the RAMP4 family.

It localises to the membrane. Its subcellular location is the endoplasmic reticulum membrane. In terms of biological role, interacts with target proteins during their translocation into the lumen of the endoplasmic reticulum. Protects unfolded target proteins against degradation during ER stress. May facilitate glycosylation of target proteins after termination of ER stress. The protein is Protein tam14 (tam14) of Schizosaccharomyces pombe (strain 972 / ATCC 24843) (Fission yeast).